An 853-amino-acid chain; its full sequence is uncharacterized protein (853 aa).

Residues 1-11 (MAPRKKAVTKK) are compositionally biased toward basic residues. Disordered regions lie at residues 1–448 (MAPR…SNNV), 485–621 (IAPT…NYFN), and 635–658 (ENYK…NEDE). Residues 20-37 (IEEEIIEEPVDEIVESDG) show a composition bias toward acidic residues. Positions 42-55 (NKKKGKRKSSKKSK) are enriched in basic residues. A compositionally biased stretch (acidic residues) spans 60-74 (ENVEEEEQDQEEEEE). A compositionally biased stretch (basic and acidic residues) spans 75–87 (GNKKQKEENDADK). Basic residues predominate over residues 88 to 107 (KSRKHDEHRKKRDSKNRRSH). The segment covering 112–121 (ENEEGEEDDE) has biased composition (acidic residues). A compositionally biased stretch (basic residues) spans 124–139 (RKKRRRRKHREKRKKN). 2 stretches are compositionally biased toward acidic residues: residues 143–166 (EEEE…EEDV) and 179–197 (DFDE…EEEQ). Residues 216-228 (DKSKKRKSKKKKR) show a composition bias toward basic residues. Acidic residues-rich tracts occupy residues 232–260 (DDDD…EDVN) and 268–286 (KEEE…DEEK). 3 stretches are compositionally biased toward basic and acidic residues: residues 287 to 361 (QSEN…RDHY), 370 to 400 (SRDH…RDHY), and 411 to 425 (RSRD…DEKS). Composition is skewed to low complexity over residues 426-447 (SSSN…SSNN), 510-613 (NNDN…SNSS), and 636-652 (NYKN…NNNK).

This is an uncharacterized protein from Dictyostelium discoideum (Social amoeba).